Here is a 52-residue protein sequence, read N- to C-terminus: Alpha-crystallin B chain (52 aa).

It belongs to the small heat shock protein (HSP20) family. As to quaternary structure, homodimer. Aggregates with homologous proteins, including alpha-A-crystallin and the small heat shock protein HSPB1, to form large heteromeric complexes.

Functionally, may contribute to the transparency and refractive index of the lens. In Trachemys scripta elegans (Red-eared slider turtle), this protein is Alpha-crystallin B chain (CRYAB).